We begin with the raw amino-acid sequence, 655 residues long: 1-deoxy-D-xylulose-5-phosphate synthase (655 aa).

Residues histidine 73 and 114 to 116 contribute to the thiamine diphosphate site; that span reads SHA. Aspartate 145 contributes to the Mg(2+) binding site. Residues 146–147, asparagine 174, tyrosine 285, and glutamate 367 contribute to the thiamine diphosphate site; that span reads GA. Asparagine 174 serves as a coordination point for Mg(2+). Positions 626-655 are disordered; sequence RQPAIEDDPTSPGEAAPAGERAGEAIGDQR. A compositionally biased stretch (basic and acidic residues) spans 646–655; that stretch reads RAGEAIGDQR.

It belongs to the transketolase family. DXPS subfamily. Homodimer. Mg(2+) serves as cofactor. Thiamine diphosphate is required as a cofactor.

It carries out the reaction D-glyceraldehyde 3-phosphate + pyruvate + H(+) = 1-deoxy-D-xylulose 5-phosphate + CO2. It functions in the pathway metabolic intermediate biosynthesis; 1-deoxy-D-xylulose 5-phosphate biosynthesis; 1-deoxy-D-xylulose 5-phosphate from D-glyceraldehyde 3-phosphate and pyruvate: step 1/1. Its function is as follows. Catalyzes the acyloin condensation reaction between C atoms 2 and 3 of pyruvate and glyceraldehyde 3-phosphate to yield 1-deoxy-D-xylulose-5-phosphate (DXP). This is 1-deoxy-D-xylulose-5-phosphate synthase from Frankia casuarinae (strain DSM 45818 / CECT 9043 / HFP020203 / CcI3).